Reading from the N-terminus, the 222-residue chain is Transmembrane reductase CYB561D2 (222 aa).

The Cytoplasmic portion of the chain corresponds to 2–17; the sequence is ALSAETESHIYRALRT. The Cytochrome b561 domain maps to 14 to 217; that stretch reads ALRTASGAAA…NQVSNAYLYR (204 aa). Residues 18–38 traverse the membrane as a helical segment; sequence ASGAAAHLVALGFTIFVAVLA. Topologically, residues 39–46 are lumenal; that stretch reads RPGSSLFS. The helical transmembrane segment at 47–67 threads the bilayer; the sequence is WHPVLMSLAFSFLMTEALLVF. A heme b-binding site is contributed by His48. Over 68–85 the chain is Cytoplasmic; it reads SPESSLLHSLSRKGRARC. Heme b is bound by residues His86 and His120. The helical transmembrane segment at 86–106 threads the bilayer; that stretch reads HWVLQLLALLCALLGLGLVIL. The Lumenal portion of the chain corresponds to 107-122; it reads HKEQLGKAHLVTRHGQ. The chain crosses the membrane as a helical span at residues 123–143; that stretch reads AGLLAVLWAGLQCSGGVGLLY. The Cytoplasmic portion of the chain corresponds to 144–162; sequence PKLLPRWPLAKLKLYHATS. His159 contributes to the heme b binding site. The chain crosses the membrane as a helical span at residues 163 to 183; sequence GLVGYLLGSASLLLGMCSLWF. Residues 184 to 186 are Lumenal-facing; it reads TAS. Residues 187 to 207 traverse the membrane as a helical segment; it reads VTGAAWYLAVLCPVLTSLVIM. At 208–222 the chain is on the cytoplasmic side; it reads NQVSNAYLYRKRIQP.

It depends on heme b as a cofactor.

It is found in the endoplasmic reticulum membrane. The protein resides in the cytoplasmic vesicle membrane. It carries out the reaction monodehydro-L-ascorbate radical(out) + L-ascorbate(in) = monodehydro-L-ascorbate radical(in) + L-ascorbate(out). It catalyses the reaction Fe(3+)(out) + L-ascorbate(in) = monodehydro-L-ascorbate radical(in) + Fe(2+)(out) + H(+). Functionally, transmembrane reductase that may use ascorbate as an electron donor in the cytoplasm and transfer electrons across endoplasmic reticulum membranes to reduce monodehydro-L-ascorbate radical and iron cations Fe(3+) in the lumen of that compartment. This Homo sapiens (Human) protein is Transmembrane reductase CYB561D2.